A 176-amino-acid chain; its full sequence is 3-hydroxydecanoyl-[acyl-carrier-protein] dehydratase (176 aa).

His-71 is a catalytic residue.

It belongs to the thioester dehydratase family. FabA subfamily. Homodimer.

Its subcellular location is the cytoplasm. The enzyme catalyses a (3R)-hydroxyacyl-[ACP] = a (2E)-enoyl-[ACP] + H2O. The catalysed reaction is (3R)-hydroxydecanoyl-[ACP] = (2E)-decenoyl-[ACP] + H2O. It catalyses the reaction (2E)-decenoyl-[ACP] = (3Z)-decenoyl-[ACP]. Its pathway is lipid metabolism; fatty acid biosynthesis. In terms of biological role, necessary for the introduction of cis unsaturation into fatty acids. Catalyzes the dehydration of (3R)-3-hydroxydecanoyl-ACP to E-(2)-decenoyl-ACP and then its isomerization to Z-(3)-decenoyl-ACP. Can catalyze the dehydratase reaction for beta-hydroxyacyl-ACPs with saturated chain lengths up to 16:0, being most active on intermediate chain length. In Rhodopseudomonas palustris (strain BisB18), this protein is 3-hydroxydecanoyl-[acyl-carrier-protein] dehydratase.